Consider the following 197-residue polypeptide: Adrenodoxin-like protein 1, mitochondrial (197 aa).

Residues 1-35 (MIGHRISRLGSTIVKQLAREGYLATYGTKNLHRSY) constitute a mitochondrion transit peptide. The 2Fe-2S ferredoxin-type domain occupies 79 to 184 (EKITIIFVDK…GVRLAIPSAT (106 aa)). Residues C118, C124, C127, and C165 each contribute to the [2Fe-2S] cluster site.

It belongs to the adrenodoxin/putidaredoxin family. It depends on [2Fe-2S] cluster as a cofactor.

Its subcellular location is the mitochondrion matrix. Functionally, associates in vitro with the adrenodoxin reductase MFDR to form an efficient low potential electron transfer chain that is able to reduce cytochrome C. Functions as accessory mitochondrial protein involved with BIO2 in the plant biotin synthase reaction. In Arabidopsis thaliana (Mouse-ear cress), this protein is Adrenodoxin-like protein 1, mitochondrial.